Reading from the N-terminus, the 342-residue chain is Tetraacyldisaccharide 4'-kinase (342 aa).

ATP is bound at residue 56–63 (TAGGAGKT).

The protein belongs to the LpxK family.

The catalysed reaction is a lipid A disaccharide + ATP = a lipid IVA + ADP + H(+). It functions in the pathway glycolipid biosynthesis; lipid IV(A) biosynthesis; lipid IV(A) from (3R)-3-hydroxytetradecanoyl-[acyl-carrier-protein] and UDP-N-acetyl-alpha-D-glucosamine: step 6/6. In terms of biological role, transfers the gamma-phosphate of ATP to the 4'-position of a tetraacyldisaccharide 1-phosphate intermediate (termed DS-1-P) to form tetraacyldisaccharide 1,4'-bis-phosphate (lipid IVA). The protein is Tetraacyldisaccharide 4'-kinase of Parvibaculum lavamentivorans (strain DS-1 / DSM 13023 / NCIMB 13966).